A 117-amino-acid polypeptide reads, in one-letter code: Aspartate 1-decarboxylase (117 aa).

Ser-25 (schiff-base intermediate with substrate; via pyruvic acid) is an active-site residue. Position 25 is a pyruvic acid (Ser) (Ser-25). Thr-57 contacts substrate. Tyr-58 acts as the Proton donor in catalysis. 73–75 (GAA) contributes to the substrate binding site.

It belongs to the PanD family. As to quaternary structure, heterooctamer of four alpha and four beta subunits. It depends on pyruvate as a cofactor. In terms of processing, is synthesized initially as an inactive proenzyme, which is activated by self-cleavage at a specific serine bond to produce a beta-subunit with a hydroxyl group at its C-terminus and an alpha-subunit with a pyruvoyl group at its N-terminus.

Its subcellular location is the cytoplasm. It catalyses the reaction L-aspartate + H(+) = beta-alanine + CO2. Its pathway is cofactor biosynthesis; (R)-pantothenate biosynthesis; beta-alanine from L-aspartate: step 1/1. Functionally, catalyzes the pyruvoyl-dependent decarboxylation of aspartate to produce beta-alanine. The sequence is that of Aspartate 1-decarboxylase from Thermoanaerobacter pseudethanolicus (strain ATCC 33223 / 39E) (Clostridium thermohydrosulfuricum).